The following is a 588-amino-acid chain: Adenine deaminase (588 aa).

This sequence belongs to the metallo-dependent hydrolases superfamily. Adenine deaminase family. In terms of assembly, homodimer. The cofactor is Mn(2+).

The enzyme catalyses adenine + H2O + H(+) = hypoxanthine + NH4(+). This is Adenine deaminase from Escherichia coli O139:H28 (strain E24377A / ETEC).